The following is a 284-amino-acid chain: Averufin oxidase A (284 aa).

A signal peptide spans 1-23 (MPTYALLGATGATGSAILRCLLA). 3 N-linked (GlcNAc...) asparagine glycosylation sites follow: asparagine 62, asparagine 86, and asparagine 190.

The protein belongs to the avfA family.

The protein operates within mycotoxin biosynthesis. In terms of biological role, averufin oxidase A; part of the fragmented gene cluster that mediates the biosynthesis of dothistromin (DOTH), a polyketide toxin very similar in structure to the aflatoxin precursor, versicolorin B. The first step of the pathway is the conversion of acetate to norsolorinic acid (NOR) and requires the fatty acid synthase subunits hexA and hexB, as well as the polyketide synthase pksA. PksA combines a hexanoyl starter unit and 7 malonyl-CoA extender units to synthesize the precursor NOR. The hexanoyl starter unit is provided to the acyl-carrier protein (ACP) domain by the fungal fatty acid synthase hexA/hexB. The second step is the conversion of NOR to averantin (AVN) and requires the norsolorinic acid ketoreductase nor1, which catalyzes the dehydration of norsolorinic acid to form (1'S)-averantin. The cytochrome P450 monooxygenase avnA then catalyzes the hydroxylation of AVN to 5'hydroxyaverantin (HAVN). The next step is performed by adhA that transforms HAVN to averufin (AVF). Averufin might then be converted to hydroxyversicolorone by cypX and avfA. Hydroxyversicolorone is further converted versiconal hemiacetal acetate (VHA) by moxY. VHA is then the substrate for the versiconal hemiacetal acetate esterase est1 to yield versiconal (VAL). Versicolorin B synthase vbsA then converts VAL to versicolorin B (VERB) by closing the bisfuran ring. Then, the activity of the versicolorin B desaturase verB leads to versicolorin A (VERA). DotB, a predicted chloroperoxidase, may perform epoxidation of the A-ring of VERA. Alternatively, a cytochrome P450, such as cypX or avnA could catalyze this step. It is also possible that another, uncharacterized, cytochrome P450 enzyme is responsible for this step. Opening of the epoxide could potentially be achieved by the epoxide hydrolase epoA. However, epoA seems not to be required for DOTH biosynthesis, but other epoxide hydrolases may have the ability to complement this hydrolysis. Alternatively, opening of the epoxide ring could be achieved non-enzymatically. The next step is the deoxygenation of ring A to yield the 5,8-dihydroxyanthraquinone which is most likely catalyzed by the NADPH dehydrogenase encoded by ver1. The last stages of DOTH biosynthesis are proposed to involve hydroxylation of the bisfuran. OrdB and norB might have oxidative roles here. An alternative possibility is that cytochrome P450 monoogenases such as avnA and cypX might perform these steps in addition to previously proposed steps. This is Averufin oxidase A from Dothistroma septosporum (strain NZE10 / CBS 128990) (Red band needle blight fungus).